The chain runs to 553 residues: Ribonuclease J 2 (553 aa).

Zn(2+) is bound by residues histidine 69, histidine 71, histidine 138, and aspartate 160. Substrate is bound at residue 361-365 (RVSGH).

The protein belongs to the metallo-beta-lactamase superfamily. RNA-metabolizing metallo-beta-lactamase-like family. Bacterial RNase J subfamily. Homodimer, may be a subunit of the RNA degradosome. Zn(2+) is required as a cofactor.

The protein localises to the cytoplasm. In terms of biological role, an RNase that has 5'-3' exonuclease and possibly endonuclease activity. Involved in maturation of rRNA and in some organisms also mRNA maturation and/or decay. Has an overlapping but not completely redundant role with RNase J1 in the decay of mRNA. This chain is Ribonuclease J 2, found in Streptococcus pyogenes serotype M3 (strain ATCC BAA-595 / MGAS315).